We begin with the raw amino-acid sequence, 293 residues long: MQGFINLDKPFGWTSHDCVARLRKMLRLKRVGHAGTLDPAATGVLPIAVGKATRLLQYLPSDKAYKATVRFGVQTTTDDLQGEIISSQPCGGLSLSEVKTSLSQFIGKIEQIPPIYSAIQVEGKRLYDLARKGETIEVPARTVEVFSIDVLDWREGDFPELDVAIACGSGTYIRAIARDLGAIFHTGGTLAALIRTHSSGFNLTDSLTLTDLETQLQAGTFEPTPADAALQYLPSVTLPSISAQKWCQGQRIELNLETVGKVRVYQAETNIFLGIGELQTGVLIPQMVFEPIS.

Asp38 serves as the catalytic Nucleophile.

The protein belongs to the pseudouridine synthase TruB family. Type 1 subfamily.

It catalyses the reaction uridine(55) in tRNA = pseudouridine(55) in tRNA. In terms of biological role, responsible for synthesis of pseudouridine from uracil-55 in the psi GC loop of transfer RNAs. In Trichormus variabilis (strain ATCC 29413 / PCC 7937) (Anabaena variabilis), this protein is tRNA pseudouridine synthase B.